A 236-amino-acid chain; its full sequence is Ureidoacrylate amidohydrolase RutB (236 aa).

The active-site Proton acceptor is D24. The active site involves K133. C166 serves as the catalytic Nucleophile.

This sequence belongs to the isochorismatase family. RutB subfamily.

It catalyses the reaction (Z)-3-ureidoacrylate + H2O + H(+) = (Z)-3-aminoacrylate + NH4(+) + CO2. The enzyme catalyses (Z)-3-ureidoacrylate + H2O = (Z)-3-aminoacrylate + carbamate + H(+). It carries out the reaction (Z)-2-methylureidoacrylate + H2O + H(+) = (Z)-2-methylaminoacrylate + NH4(+) + CO2. Hydrolyzes ureidoacrylate to form aminoacrylate and carbamate. The carbamate hydrolyzes spontaneously, thereby releasing one of the nitrogen atoms of the pyrimidine ring as ammonia and one of its carbon atoms as CO2. In Klebsiella variicola (strain At-22), this protein is Ureidoacrylate amidohydrolase RutB.